We begin with the raw amino-acid sequence, 382 residues long: Alanine racemase (382 aa).

Residue lysine 39 is the Proton acceptor; specific for D-alanine of the active site. Position 39 is an N6-(pyridoxal phosphate)lysine (lysine 39). Arginine 138 lines the substrate pocket. Tyrosine 265 (proton acceptor; specific for L-alanine) is an active-site residue. Methionine 312 contacts substrate.

This sequence belongs to the alanine racemase family. Pyridoxal 5'-phosphate serves as cofactor.

It catalyses the reaction L-alanine = D-alanine. It functions in the pathway amino-acid biosynthesis; D-alanine biosynthesis; D-alanine from L-alanine: step 1/1. Catalyzes the interconversion of L-alanine and D-alanine. May also act on other amino acids. The sequence is that of Alanine racemase (alr) from Staphylococcus epidermidis (strain ATCC 35984 / DSM 28319 / BCRC 17069 / CCUG 31568 / BM 3577 / RP62A).